Consider the following 178-residue polypeptide: ATP synthase subunit delta (178 aa).

This sequence belongs to the ATPase delta chain family. F-type ATPases have 2 components, F(1) - the catalytic core - and F(0) - the membrane proton channel. F(1) has five subunits: alpha(3), beta(3), gamma(1), delta(1), epsilon(1). F(0) has three main subunits: a(1), b(2) and c(10-14). The alpha and beta chains form an alternating ring which encloses part of the gamma chain. F(1) is attached to F(0) by a central stalk formed by the gamma and epsilon chains, while a peripheral stalk is formed by the delta and b chains.

The protein localises to the cell membrane. Functionally, f(1)F(0) ATP synthase produces ATP from ADP in the presence of a proton or sodium gradient. F-type ATPases consist of two structural domains, F(1) containing the extramembraneous catalytic core and F(0) containing the membrane proton channel, linked together by a central stalk and a peripheral stalk. During catalysis, ATP synthesis in the catalytic domain of F(1) is coupled via a rotary mechanism of the central stalk subunits to proton translocation. Its function is as follows. This protein is part of the stalk that links CF(0) to CF(1). It either transmits conformational changes from CF(0) to CF(1) or is implicated in proton conduction. This chain is ATP synthase subunit delta, found in Streptococcus pyogenes serotype M49 (strain NZ131).